The following is a 297-amino-acid chain: Non-structural protein VP10 (297 aa).

The protein is Non-structural protein VP10 of Oryza latifolia (Indian wild rice).